Here is a 126-residue protein sequence, read N- to C-terminus: Glycine cleavage system H protein (126 aa).

The Lipoyl-binding domain occupies 24–105 (TLTVGITDHA…AYGVWLFKIK (82 aa)). Lys-65 is subject to N6-lipoyllysine.

This sequence belongs to the GcvH family. The glycine cleavage system is composed of four proteins: P, T, L and H. Requires (R)-lipoate as cofactor.

The glycine cleavage system catalyzes the degradation of glycine. The H protein shuttles the methylamine group of glycine from the P protein to the T protein. This is Glycine cleavage system H protein from Burkholderia ambifaria (strain MC40-6).